We begin with the raw amino-acid sequence, 417 residues long: MSVGCPEPEPLHSLPCCGPGAAPVPGAGVPLLTEDMQALTLRTLAASDVTKHYELVRELGKGTYGKVDLVAYKGTGTKMALKFVNKSKTKLKNFLREVSITNSLSSSPFIIKVFDVVFETEECYVFAQEYAPAGDLFDIIPPQVGLPEDTVKRCVQQLGLALDFMHSRQLVHRDIKPENVLLFDRECRRVKLADFGMTRRVGCRVKRVSGTIPYTAPEVCQAGRADGFAVDTGVDVWAFGVLIFCVLTGNFPWEAASGADAFFEEFVRWQRGRLPGLPSQWRRFTEPALRMFQRLLALEPERRGPAKEVFRFLKHELTSELRRRPSHRARKPPGDRLPGSLRLEAPGPLKRTVLTESGSGSRPSPPSVGPVVPVPVPVPVPVPEAGLAPPAPPGRTDGRTDKSKGQVVLATAIEICV.

The Protein kinase domain occupies 53–318; sequence YELVRELGKG…VFRFLKHELT (266 aa). Residues 59–67 and Lys82 contribute to the ATP site; that span reads LGKGTYGKV. Asp174 acts as the Proton acceptor in catalysis. The tract at residues 321–405 is disordered; sequence LRRRPSHRAR…TDGRTDKSKG (85 aa). Residues 363–382 are compositionally biased toward pro residues; sequence PSPPSVGPVVPVPVPVPVPV.

It belongs to the protein kinase superfamily. Ser/Thr protein kinase family.

The protein localises to the cytoplasm. It carries out the reaction L-seryl-[protein] + ATP = O-phospho-L-seryl-[protein] + ADP + H(+). It catalyses the reaction L-threonyl-[protein] + ATP = O-phospho-L-threonyl-[protein] + ADP + H(+). Functionally, may be involved in signal-transduction pathways related to the control of brain development. In Mus musculus (Mouse), this protein is Serine/threonine-protein kinase SBK1 (Sbk1).